The following is a 608-amino-acid chain: 1-phosphatidylinositol 4,5-bisphosphate phosphodiesterase zeta-1 (608 aa).

Residues 35–70 (CSYIHVKQIFKDNDRLKQGRITIEEFRAIYRIITHR) enclose the EF-hand domain. Residues 155-299 (QDMTHPLNDY…LKFKILVKNK (145 aa)) form the PI-PLC X-box domain. Catalysis depends on residues His170 and His215. The segment at 305–324 (KETHERKGSDKRGDNQDKET) is disordered. The PI-PLC Y-box domain maps to 349–465 (LSDLVIYTKA…GYILKPHFLR (117 aa)). A C2 domain is found at 465–589 (RESKSYFNPS…KGYRRIPLFS (125 aa)).

Interacts via its C2 domain with PtdIns(3)P and, to a lesser extent, PtdIns(5)P in vitro. It depends on Ca(2+) as a cofactor. As to expression, expressed specifically in testis and sperm. Weakly expressed in pancreatic-duct cells. Up-regulated in pancreatic-duct cells from patients with cystic fibrosis.

It is found in the nucleus. Its subcellular location is the cytoplasm. The protein resides in the perinuclear region. It catalyses the reaction a 1,2-diacyl-sn-glycero-3-phospho-(1D-myo-inositol-4,5-bisphosphate) + H2O = 1D-myo-inositol 1,4,5-trisphosphate + a 1,2-diacyl-sn-glycerol + H(+). Functionally, the production of the second messenger molecules diacylglycerol (DAG) and inositol 1,4,5-trisphosphate (IP3) is mediated by activated phosphatidylinositol-specific phospholipase C enzymes. In vitro, hydrolyzes PtdIns(4,5)P2 in a Ca(2+)-dependent manner. Triggers intracellular Ca(2+) oscillations in oocytes solely during M phase and is involved in inducing oocyte activation and initiating embryonic development up to the blastocyst stage. Is therefore a strong candidate for the egg-activating soluble sperm factor that is transferred from the sperm into the egg cytoplasm following gamete membrane fusion. May exert an inhibitory effect on phospholipase-C-coupled processes that depend on calcium ions and protein kinase C, including CFTR trafficking and function. The polypeptide is 1-phosphatidylinositol 4,5-bisphosphate phosphodiesterase zeta-1 (Homo sapiens (Human)).